Consider the following 60-residue polypeptide: Beta-defensin 8 (60 aa).

Positions 1–22 (MRIHYLLFTFLLVLLSPLAAFS) are cleaved as a signal peptide. Positions 23-25 (QKI) are excised as a propeptide. 3 disulfides stabilise this stretch: Cys31-Cys58, Cys38-Cys52, and Cys42-Cys59.

It belongs to the beta-defensin family. Most highly expressed in testis and heart.

It is found in the secreted. In terms of biological role, a synthetic peptide displays antimicrobial activities against S.aureus, P.aeruginosa, E.coli and B.cepacia. The antimicrobial activity against S.aureus, E.coli and B.cepacia is reduced in raised concentration of NaCl, but its action against P.aeruginosa is independent of NaCl concentration. The sequence is that of Beta-defensin 8 (Defb8) from Mus musculus (Mouse).